The following is a 95-amino-acid chain: Class II hydrophobin 3 (95 aa).

Residues Met-1–Ala-16 form the signal peptide. Cystine bridges form between Cys-28/Cys-77, Cys-38/Cys-68, Cys-39/Cys-51, and Cys-78/Cys-89.

It belongs to the cerato-ulmin hydrophobin family.

It localises to the secreted. It is found in the cell wall. In terms of biological role, aerial growth, conidiation, and dispersal of filamentous fungi in the environment rely upon a capability of their secreting small amphipathic proteins called hydrophobins (HPBs) with low sequence identity. Class I can self-assemble into an outermost layer of rodlet bundles on aerial cell surfaces, conferring cellular hydrophobicity that supports fungal growth, development and dispersal; whereas Class II form highly ordered films at water-air interfaces through intermolecular interactions but contribute nothing to the rodlet structure. Hyd3 plays a neglectable role in hyphal growth and asexual development and does not seem involved in cellular hydrophobicity, conidial adhesion, stress tolerance nor insect pathogenicity. The sequence is that of Class II hydrophobin 3 from Metarhizium robertsii (strain ARSEF 23 / ATCC MYA-3075) (Metarhizium anisopliae (strain ARSEF 23)).